A 298-amino-acid chain; its full sequence is 4-hydroxy-tetrahydrodipicolinate synthase (298 aa).

Thr-48 is a pyruvate binding site. Residue Tyr-137 is the Proton donor/acceptor of the active site. Catalysis depends on Lys-166, which acts as the Schiff-base intermediate with substrate. Residue Ile-207 coordinates pyruvate.

Belongs to the DapA family. As to quaternary structure, homotetramer; dimer of dimers.

The protein resides in the cytoplasm. The catalysed reaction is L-aspartate 4-semialdehyde + pyruvate = (2S,4S)-4-hydroxy-2,3,4,5-tetrahydrodipicolinate + H2O + H(+). It functions in the pathway amino-acid biosynthesis; L-lysine biosynthesis via DAP pathway; (S)-tetrahydrodipicolinate from L-aspartate: step 3/4. Functionally, catalyzes the condensation of (S)-aspartate-beta-semialdehyde [(S)-ASA] and pyruvate to 4-hydroxy-tetrahydrodipicolinate (HTPA). The polypeptide is 4-hydroxy-tetrahydrodipicolinate synthase (Campylobacter lari (strain RM2100 / D67 / ATCC BAA-1060)).